Reading from the N-terminus, the 86-residue chain is Alpha-mammal toxin Ts3 (86 aa).

An N-terminal signal peptide occupies residues 1-19; that stretch reads MNYFILLVVVCLLTAGTEG. An LCN-type CS-alpha/beta domain is found at 21-82; that stretch reads KDGYPVEYDN…EPTKTNGKCK (62 aa). Intrachain disulfides connect Cys-31–Cys-81, Cys-35–Cys-57, Cys-43–Cys-64, and Cys-47–Cys-66. Ser-83 carries the post-translational modification Serine amide.

Expressed by the venom gland.

The protein localises to the secreted. Functionally, alpha toxins bind voltage-independently at site-3 of sodium channels (Nav) and inhibit the inactivation of the activated channels, thereby blocking neuronal transmission. This synthetic toxin inhibits inactivation of rat Nav1.4/SCN4A (when tested at 201 nM). In addition, it has been shown to cause a persistent sodium channel activation in nitrergic inhibitory fibers innervating the rabbit corpus cavernosum, resulting in NO release and cavernosal smooth muscle relaxation. This toxin is active against mammals. Its function is as follows. this synthetic peptide with a Ser at position 31 (C12S) acts as a bradykinin-potentiating peptide (BPP). Induces endothelium-dependent vasodilation that is reverted by NO synthase inhibitor, suggesting it activates molecular targets on vascular endothelium leading to NO production and vasodilation. It appears to induce vasodilation through muscarinic acetylcholine receptors (AChR) M2 (CHRM2) and M3 (CHRM3). Does not inhibit the angiotensin-converting enzyme (ACE). Does not act via bradykinin B2 receptor. This Tityus serrulatus (Brazilian scorpion) protein is Alpha-mammal toxin Ts3.